The following is a 255-amino-acid chain: Thiazole synthase (255 aa).

The Schiff-base intermediate with DXP role is filled by K96. Residues G157, 183–184 (AG), and 205–206 (NT) each bind 1-deoxy-D-xylulose 5-phosphate.

It belongs to the ThiG family. Homotetramer. Forms heterodimers with either ThiH or ThiS.

It localises to the cytoplasm. The enzyme catalyses [ThiS sulfur-carrier protein]-C-terminal-Gly-aminoethanethioate + 2-iminoacetate + 1-deoxy-D-xylulose 5-phosphate = [ThiS sulfur-carrier protein]-C-terminal Gly-Gly + 2-[(2R,5Z)-2-carboxy-4-methylthiazol-5(2H)-ylidene]ethyl phosphate + 2 H2O + H(+). The protein operates within cofactor biosynthesis; thiamine diphosphate biosynthesis. Catalyzes the rearrangement of 1-deoxy-D-xylulose 5-phosphate (DXP) to produce the thiazole phosphate moiety of thiamine. Sulfur is provided by the thiocarboxylate moiety of the carrier protein ThiS. In vitro, sulfur can be provided by H(2)S. The sequence is that of Thiazole synthase from Staphylococcus epidermidis (strain ATCC 12228 / FDA PCI 1200).